A 736-amino-acid chain; its full sequence is MEQVIQNNCSEVDPHVLSYCTGYANDAIKDVDEASDHTISLIRNLLLDAGAREEAVQLIQNELEKQFKEREEHLDTLQTNGLVRLKETIRMDSQSEISSTMGLVGEKMELDAVKGRKVESRVDRRKLEKAERKIRAKWEKRTIKAEYESSKLVQPEQKSYEEFYMAVNPLDLSGSNQGKSKDIKIDGIDLAFAGHRILTGASLTLAQGRRYGLTGRNGIGKSTLLRALSRREIAIPTHITILHVEQEMTGDDTPALQSVLDADVWRKYLIQDQEKITNRLSTIEKELEELSKDQTADQAISRRLERERDELDLRLLDIQNKLSEMDSDRAESRAATILAGLGFTQEMQSHATKTFSGGWRMRLSLARALFCQPDLLLLDEPSNMLDVPSIAFLSEYLQTYKNIVLVVSHDRSFLNEVATDIIHQHSERLDYYKGNFSQFYATREERCKNQLREYEKQMEYRKHLQSFIDKFRYNAAKSSEAQSRIKKLEKLPILEKPQTEEEVEFEFPPVEKISPPILQMSDVNFEYVPGHPILKHVDIDVQMDSRIGVVGPNGAGKSTMLKLLIEQLHPTSGIVSRHPRLRIAYFAQHHVDTLDLNLNALSFLAKTFPGKGEEEYRRHLGAFGVSGPLALQKMITLSGGQKSRVAFACLGLQNPHILILDEPTNHLDMESMDALTRAVKRFQGGVILVSHDVDFLDKTCTSIWQCDHNVVSKFDGTISQYKKFCLSQQPTMTIKT.

ABC transporter domains follow at residues 183-459 (IKID…KQME) and 518-734 (LQMS…TMTI). Residues 215-222 (GRNGIGKS) and 551-558 (GPNGAGKS) each bind ATP.

It belongs to the ABC transporter superfamily.

It is found in the cytoplasm. This is an uncharacterized protein from Schizosaccharomyces pombe (strain 972 / ATCC 24843) (Fission yeast).